Here is a 112-residue protein sequence, read N- to C-terminus: Large ribosomal subunit protein uL22 (112 aa).

This sequence belongs to the universal ribosomal protein uL22 family. As to quaternary structure, part of the 50S ribosomal subunit.

Functionally, this protein binds specifically to 23S rRNA; its binding is stimulated by other ribosomal proteins, e.g. L4, L17, and L20. It is important during the early stages of 50S assembly. It makes multiple contacts with different domains of the 23S rRNA in the assembled 50S subunit and ribosome. Its function is as follows. The globular domain of the protein is located near the polypeptide exit tunnel on the outside of the subunit, while an extended beta-hairpin is found that lines the wall of the exit tunnel in the center of the 70S ribosome. The sequence is that of Large ribosomal subunit protein uL22 from Caldanaerobacter subterraneus subsp. tengcongensis (strain DSM 15242 / JCM 11007 / NBRC 100824 / MB4) (Thermoanaerobacter tengcongensis).